Reading from the N-terminus, the 382-residue chain is Pyrimidine monooxygenase RutA (382 aa).

FMN-binding positions include 68-69 (IK), Asn-134, Glu-143, 159-160 (RY), and Ser-209.

The protein belongs to the NtaA/SnaA/DszA monooxygenase family. RutA subfamily.

It catalyses the reaction uracil + FMNH2 + NADH + O2 = (Z)-3-ureidoacrylate + FMN + NAD(+) + H2O + H(+). It carries out the reaction thymine + FMNH2 + NADH + O2 = (Z)-2-methylureidoacrylate + FMN + NAD(+) + H2O + H(+). Catalyzes the pyrimidine ring opening between N-3 and C-4 by an unusual flavin hydroperoxide-catalyzed mechanism, adding oxygen atoms in the process to yield ureidoacrylate peracid, that immediately reacts with FMN forming ureidoacrylate and FMN-N(5)-oxide. The FMN-N(5)-oxide reacts spontaneously with NADH to produce FMN. Requires the flavin reductase RutF to regenerate FMN in vivo. This chain is Pyrimidine monooxygenase RutA (rutA), found in Escherichia coli O157:H7.